The sequence spans 462 residues: UDP-N-acetylmuramate--L-alanine ligase (462 aa).

114–120 (GSHGKTT) contacts ATP.

It belongs to the MurCDEF family.

The protein resides in the cytoplasm. It catalyses the reaction UDP-N-acetyl-alpha-D-muramate + L-alanine + ATP = UDP-N-acetyl-alpha-D-muramoyl-L-alanine + ADP + phosphate + H(+). The protein operates within cell wall biogenesis; peptidoglycan biosynthesis. Cell wall formation. The polypeptide is UDP-N-acetylmuramate--L-alanine ligase (Brachyspira hyodysenteriae (strain ATCC 49526 / WA1)).